The primary structure comprises 376 residues: Cinnamyl alcohol dehydrogenase 2 (376 aa).

Cys44 serves as a coordination point for Zn(2+). Ser46 is a binding site for NADP(+). Zn(2+)-binding residues include His66, Glu67, Cys97, Cys100, Cys103, Cys111, and Cys161. NADP(+) is bound by residues Thr165, 187-192 (GLGGLG), 210-215 (SRSSEK), Thr250, Gly274, and 297-299 (SQI).

This sequence belongs to the zinc-containing alcohol dehydrogenase family. As to quaternary structure, homodimer. The cofactor is Zn(2+). Expressed at the base of the stems.

It catalyses the reaction (E)-cinnamyl alcohol + NADP(+) = (E)-cinnamaldehyde + NADPH + H(+). The enzyme catalyses (E)-coniferol + NADP(+) = (E)-coniferaldehyde + NADPH + H(+). The catalysed reaction is (E)-sinapyl alcohol + NADP(+) = (E)-sinapaldehyde + NADPH + H(+). It carries out the reaction (E)-4-coumaroyl alcohol + NADP(+) = (E)-4-coumaraldehyde + NADPH + H(+). It catalyses the reaction (E)-caffeyl alcohol + NADP(+) = (E)-caffeyl aldehyde + NADPH + H(+). It functions in the pathway aromatic compound metabolism; phenylpropanoid biosynthesis. Involved in lignin biosynthesis. Catalyzes the final step specific for the production of lignin monomers. Catalyzes the NADPH-dependent reduction of coniferaldehyde, 5-hydroxyconiferaldehyde, sinapaldehyde, 4-coumaraldehyde and caffeyl aldehyde to their respective alcohols. The protein is Cinnamyl alcohol dehydrogenase 2 of Arabidopsis thaliana (Mouse-ear cress).